The following is an 83-amino-acid chain: Cell division protein ZapB (83 aa).

Positions 7-80 (EMLEKLEAKV…RVRTLLGKMD (74 aa)) form a coiled coil.

Belongs to the ZapB family. In terms of assembly, homodimer. The ends of the coiled-coil dimer bind to each other, forming polymers. Interacts with FtsZ.

It is found in the cytoplasm. Non-essential, abundant cell division factor that is required for proper Z-ring formation. It is recruited early to the divisome by direct interaction with FtsZ, stimulating Z-ring assembly and thereby promoting cell division earlier in the cell cycle. Its recruitment to the Z-ring requires functional FtsA or ZipA. The polypeptide is Cell division protein ZapB (Photobacterium profundum (strain SS9)).